We begin with the raw amino-acid sequence, 420 residues long: Calreticulin (420 aa).

The signal sequence occupies residues 1 to 18; that stretch reads MKWGVVAVLATLVVAASA. Cys-106 and Cys-140 are oxidised to a cystine. Residues Tyr-110, Lys-112, Tyr-131, and Asp-138 each contribute to the an alpha-D-glucoside site. 7 tandem repeats follow at residues 194 to 205, 213 to 224, 230 to 241, 248 to 259, 263 to 273, 277 to 287, and 291 to 301. Residues 194-259 are 4 X approximate repeats; it reads VASGSLYEDW…DAKKPEDWDD (66 aa). A compositionally biased stretch (basic and acidic residues) spans 210–220; that stretch reads TIKDPKASKPE. Residues 210–272 form a disordered region; that stretch reads TIKDPKASKP…GTWEPPMIPN (63 aa). Residues 221 to 230 are compositionally biased toward acidic residues; the sequence is DWDEREEIAD. The 3 X approximate repeats stretch occupies residues 263–301; sequence GTWEPPMIPNPEYKGEWKAKMIKNPAYKGIWVAPDIDNP. An alpha-D-glucoside is bound at residue Glu-321. The span at 357-376 shows a compositional bias: basic and acidic residues; sequence EEKAMFDKVKKEEDEKKAKD. Positions 357–420 are disordered; that stretch reads EEKAMFDKVK…EEEESGHDEL (64 aa). Composition is skewed to acidic residues over residues 385 to 398 and 411 to 420; these read EAAE…EDKE and EEEESGHDEL. Positions 417 to 420 match the Prevents secretion from ER motif; sequence HDEL.

This sequence belongs to the calreticulin family.

The protein localises to the endoplasmic reticulum lumen. Functionally, molecular calcium-binding chaperone promoting folding, oligomeric assembly and quality control in the ER via the calreticulin/calnexin cycle. This lectin may interact transiently with almost all of the monoglucosylated glycoproteins that are synthesized in the ER. The protein is Calreticulin of Chlamydomonas reinhardtii (Chlamydomonas smithii).